The sequence spans 396 residues: Probable sugar efflux transporter (396 aa).

The Cytoplasmic segment spans residues 1–14; that stretch reads MTTNTVSRKVAWLR. A helical transmembrane segment spans residues 15-35; sequence VVTLAVAAFIFNTTEFVPVGL. Over 36–49 the chain is Periplasmic; the sequence is LSDIAQSFHMQTAQ. A helical membrane pass occupies residues 50–70; the sequence is VGIMLTIYAWVVALMSLPFML. The Cytoplasmic portion of the chain corresponds to 71 to 80; sequence MTSQVERRKL. A helical membrane pass occupies residues 81–101; it reads LICLFVVFIASHVLSFLSWSF. Threonine 102 is a topological domain (periplasmic). A helical transmembrane segment spans residues 103–123; it reads VLVISRIGVAFAHAIFWSITA. Residues 124-135 lie on the Cytoplasmic side of the membrane; that stretch reads SLAIRMAPAGKR. Residues 136-156 traverse the membrane as a helical segment; it reads AQALSLIATGTALAMVLGLPL. Residues 157-169 lie on the Periplasmic side of the membrane; that stretch reads GRIVGQYFGWRMT. The chain crosses the membrane as a helical span at residues 170–190; it reads FFAIGIGALVTLLCLIKLLPL. The Cytoplasmic segment spans residues 191-208; sequence LPSEHSGSLKSLPLLFRR. A helical membrane pass occupies residues 209–229; the sequence is PALMSIYLLTVVVVTAHYTAY. Residues 230–245 lie on the Periplasmic side of the membrane; that stretch reads SYIEPFVQNIAGFSAN. Residues 246–266 form a helical membrane-spanning segment; that stretch reads FATALLLLLGGAGIIGSVIFG. Residues 267–274 lie on the Cytoplasmic side of the membrane; sequence KLGNQYAS. A helical membrane pass occupies residues 275–295; sequence ALVSTAIALLLVCLALLLPAA. The Periplasmic portion of the chain corresponds to 296-298; that stretch reads NSE. Residues 299 to 319 form a helical membrane-spanning segment; it reads IHLGVLSIFWGIAMMIIGLGM. Residues 320–332 lie on the Cytoplasmic side of the membrane; the sequence is QVKVLALAPDATD. The chain crosses the membrane as a helical span at residues 333–353; the sequence is VAMALFSGIFNIGIGAGALVG. The Periplasmic portion of the chain corresponds to 354-363; that stretch reads NQVSLHWSMS. The chain crosses the membrane as a helical span at residues 364–384; sequence MIGYVGAVPAFAALIWSIIIF. Topologically, residues 385-396 are cytoplasmic; the sequence is RRWPVTLEEQTQ.

Belongs to the major facilitator superfamily. SotB (TC 2.A.1.2) family.

The protein localises to the cell inner membrane. Involved in the efflux of sugars. The physiological role may be the reduction of the intracellular concentration of toxic sugars or sugar metabolites. The protein is Probable sugar efflux transporter of Shigella flexneri.